Reading from the N-terminus, the 256-residue chain is Nuclear shuttle protein (256 aa).

The Bipartite nuclear localization signal signature appears at 21 to 42; sequence NSLIRQQSLFKRNVSKRRPFQT. The Nuclear localization signal motif lies at 81 to 96; it reads DIAKSLPNRTRSYIKL. The interval 150 to 187 is interaction with Arabidopsis thaliana NSI protein; the sequence is ELFGARIHSHGNLAIVPSLKDRFYIRHVLKRVISVEKD.

The protein belongs to the begomovirus nuclear shuttle protein family. Binds to single-stranded and double-stranded viral DNA. Interacts with the host nuclear shuttle interacting (NSI) protein. This interaction may allow NSP to recruit NSI monomers to the viral genome and thus regulate nuclear export of viral genome by NSP.

It is found in the host nucleus. It localises to the host cytoplasm. The protein localises to the host cell membrane. Binds to the genomic viral ssDNA, shuttles it into and out of the cell nucleus. Begomoviruses use 2 proteins to transport their DNA from cell to cell. The nuclear shuttle protein (NSP) shuttles it between nucleus and cytoplasm and the movement protein (MP) probably transports the DNA-NSP complex to the cell periphery and facilitates movement across the cell wall. This is Nuclear shuttle protein from Potato yellow mosaic virus (isolate Venezuela) (PYMV).